The primary structure comprises 313 residues: Ribosomal RNA small subunit methyltransferase H (313 aa).

S-adenosyl-L-methionine is bound by residues 35–37 (GGH), aspartate 55, phenylalanine 79, aspartate 101, and glutamine 108.

It belongs to the methyltransferase superfamily. RsmH family.

Its subcellular location is the cytoplasm. The catalysed reaction is cytidine(1402) in 16S rRNA + S-adenosyl-L-methionine = N(4)-methylcytidine(1402) in 16S rRNA + S-adenosyl-L-homocysteine + H(+). Specifically methylates the N4 position of cytidine in position 1402 (C1402) of 16S rRNA. This Enterobacter sp. (strain 638) protein is Ribosomal RNA small subunit methyltransferase H.